A 64-amino-acid polypeptide reads, in one-letter code: Translation machinery-associated protein 7 (64 aa).

2 disordered regions span residues 1-38 and 45-64; these read MSSR…ADAA and ANMK…SGKK. A compositionally biased stretch (basic and acidic residues) spans 27 to 38; that stretch reads IAFKEKQKADAA. A compositionally biased stretch (gly residues) spans 53-64; the sequence is LVGGGIKKSGKK.

The protein belongs to the TMA7 family. As to quaternary structure, interacts with the 40S ribosomal subunit.

It is found in the cytoplasm. Its subcellular location is the nucleus. Involved in protein synthesis. This chain is Translation machinery-associated protein 7 (TMA7), found in Saccharomyces cerevisiae (strain ATCC 204508 / S288c) (Baker's yeast).